A 255-amino-acid polypeptide reads, in one-letter code: ATP-dependent L-serine kinase (255 aa).

Residue E36 is part of the active site. V74 contacts O-phospho-L-serine. Mg(2+) is bound at residue D75. O-phospho-L-serine-binding residues include G76, H77, H78, W108, K234, T236, and H238.

It belongs to the SerK family. Mg(2+) serves as cofactor.

It catalyses the reaction L-serine + ATP = O-phospho-L-serine + ADP + H(+). Its function is as follows. Free serine kinase that uses ATP to phosphorylate L-serine to yield O-phospho-L-serine and ADP. This Desulfurococcus mucosus (strain ATCC 35584 / DSM 2162 / JCM 9187 / O7/1) protein is ATP-dependent L-serine kinase.